A 1019-amino-acid polypeptide reads, in one-letter code: Probable ubiquitination network signaling protein acrB (1019 aa).

The tract at residues 1–142 (MPRSSATARK…TGNKRSPSNA (142 aa)) is disordered. Low complexity predominate over residues 33–63 (NGHLNGNLNGGSASSSLSSSQVDLPSSRSSS). 3 stretches are compositionally biased toward polar residues: residues 68-83 (PTTT…TPDS), 102-117 (TDMS…SQTG), and 131-142 (SATGNKRSPSNA). 3 consecutive transmembrane segments (helical) span residues 163–183 (IAIL…VQFL), 216–236 (LGTM…FMWT), and 259–279 (FGKN…MHLV). Disordered regions lie at residues 343–372 (ARRS…GSQT), 580–603 (DAEQ…PTTT), 831–859 (LDPG…GALT), 879–905 (SPLQ…PSYL), and 963–1019 (DKRS…GKTN). A coiled-coil region spans residues 602–788 (TTLKNSIVNA…REQDQAKLEA (187 aa)). The span at 992 to 1008 (RGSGSGSNGSGGSGSGS) shows a compositional bias: gly residues.

It belongs to the acrB family.

It is found in the membrane. In terms of biological role, component of the regulatory network controlling carbon source utilization through ubiquitination and deubiquitination involving creA, creB, creC, creD and acrB. Involved in resistance to acriflavine, and required for normal growth on a range of sole carbon sources, including fructose, cellobiose, raffinose, and starch, and reduced utilization of amino acids, including GABA and beta-alanine, as sole carbon and nitrogen sources. The sequence is that of Probable ubiquitination network signaling protein acrB (acrB) from Neosartorya fischeri (strain ATCC 1020 / DSM 3700 / CBS 544.65 / FGSC A1164 / JCM 1740 / NRRL 181 / WB 181) (Aspergillus fischerianus).